Consider the following 128-residue polypeptide: Ribonuclease pancreatic (128 aa).

The segment at 1–20 (KETAAMKFQRQHMDSGSSLS) is disordered. Residues Lys7 and Arg10 each coordinate substrate. The Proton acceptor role is filled by His12. 4 disulfide bridges follow: Cys26-Cys84, Cys40-Cys95, Cys58-Cys110, and Cys65-Cys72. An N-linked (GlcNAc...) asparagine glycan is attached at Asn34. Substrate contacts are provided by residues 41–45 (KPVNT), Lys66, and Arg85. His119 functions as the Proton donor in the catalytic mechanism.

This sequence belongs to the pancreatic ribonuclease family. In terms of assembly, monomer. Interacts with and forms tight 1:1 complexes with RNH1. Dimerization of two such complexes may occur. Interaction with RNH1 inhibits this protein. In terms of tissue distribution, pancreas.

It localises to the secreted. The enzyme catalyses an [RNA] containing cytidine + H2O = an [RNA]-3'-cytidine-3'-phosphate + a 5'-hydroxy-ribonucleotide-3'-[RNA].. It catalyses the reaction an [RNA] containing uridine + H2O = an [RNA]-3'-uridine-3'-phosphate + a 5'-hydroxy-ribonucleotide-3'-[RNA].. Functionally, endonuclease that catalyzes the cleavage of RNA on the 3' side of pyrimidine nucleotides. Acts on single-stranded and double-stranded RNA. This chain is Ribonuclease pancreatic (RNASE1), found in Choloepus hoffmanni (Hoffmann's two-fingered sloth).